Consider the following 365-residue polypeptide: tRNA N6-adenosine threonylcarbamoyltransferase (365 aa).

Fe cation contacts are provided by His-111 and His-115. Substrate contacts are provided by residues 140-144 (IVSGG), Asp-173, Gly-186, and Asn-298. Residue Asp-323 participates in Fe cation binding.

Belongs to the KAE1 / TsaD family. Fe(2+) serves as cofactor.

Its subcellular location is the cytoplasm. The catalysed reaction is L-threonylcarbamoyladenylate + adenosine(37) in tRNA = N(6)-L-threonylcarbamoyladenosine(37) in tRNA + AMP + H(+). Its function is as follows. Required for the formation of a threonylcarbamoyl group on adenosine at position 37 (t(6)A37) in tRNAs that read codons beginning with adenine. Is involved in the transfer of the threonylcarbamoyl moiety of threonylcarbamoyl-AMP (TC-AMP) to the N6 group of A37, together with TsaE and TsaB. TsaD likely plays a direct catalytic role in this reaction. The chain is tRNA N6-adenosine threonylcarbamoyltransferase from Thermomicrobium roseum (strain ATCC 27502 / DSM 5159 / P-2).